The following is a 630-amino-acid chain: Probable potassium transport system protein Kup 2 (630 aa).

A run of 12 helical transmembrane segments spans residues 14 to 34 (ATGF…DIGT), 56 to 76 (VIVL…VTAK), 108 to 128 (VPLL…SMIT), 145 to 165 (PALQ…LFAF), 176 to 196 (AFGP…LLHI), 214 to 234 (FMLS…LAVT), 255 to 275 (WLFF…AMVL), 293 to 313 (LLVP…QAVI), 352 to 372 (MLLL…SALA), 375 to 395 (YGIA…VVVW), 402 to 422 (PAAA…FFSA), and 427 to 447 (LMEG…LVWT).

The protein belongs to the HAK/KUP transporter (TC 2.A.72) family.

Its subcellular location is the cell inner membrane. It carries out the reaction K(+)(in) + H(+)(in) = K(+)(out) + H(+)(out). Transport of potassium into the cell. Likely operates as a K(+):H(+) symporter. In Rhodopseudomonas palustris (strain BisA53), this protein is Probable potassium transport system protein Kup 2.